Here is a 955-residue protein sequence, read N- to C-terminus: 2-oxoglutarate dehydrogenase E1 component (955 aa).

It belongs to the alpha-ketoglutarate dehydrogenase family. As to quaternary structure, homodimer. Part of the 2-oxoglutarate dehydrogenase (OGDH) complex composed of E1 (2-oxoglutarate dehydrogenase), E2 (dihydrolipoamide succinyltransferase) and E3 (dihydrolipoamide dehydrogenase); the complex contains multiple copies of the three enzymatic components (E1, E2 and E3). Requires thiamine diphosphate as cofactor.

It catalyses the reaction N(6)-[(R)-lipoyl]-L-lysyl-[protein] + 2-oxoglutarate + H(+) = N(6)-[(R)-S(8)-succinyldihydrolipoyl]-L-lysyl-[protein] + CO2. In terms of biological role, E1 component of the 2-oxoglutarate dehydrogenase (OGDH) complex which catalyzes the decarboxylation of 2-oxoglutarate, the first step in the conversion of 2-oxoglutarate to succinyl-CoA and CO(2). The sequence is that of 2-oxoglutarate dehydrogenase E1 component from Bacillus mycoides (strain KBAB4) (Bacillus weihenstephanensis).